The following is a 20-amino-acid chain: RVSNLTIHPLRNIIDLRYVG.

Asparagine 4 carries an N-linked (GlcNAc...) asparagine glycan.

The protein belongs to the peptidase A1 family. In terms of tissue distribution, highly expressed in the placenta between day 60 and day 100 of gestation.

Its subcellular location is the secreted. It is found in the extracellular space. This chain is Pregnancy-associated glycoprotein 55h, found in Ovis aries (Sheep).